Reading from the N-terminus, the 388-residue chain is Flap endonuclease 1 (388 aa).

The tract at residues Met-1–Arg-104 is N-domain. Mg(2+) is bound at residue Asp-34. 2 residues coordinate DNA: Arg-47 and Arg-70. Positions 86, 158, 160, 179, and 181 each coordinate Mg(2+). The interval Gln-122–Tyr-253 is I-domain. Glu-158 is a binding site for DNA. Gly-231 and Asp-233 together coordinate DNA. A Mg(2+)-binding site is contributed by Asp-233. Residues Thr-336 to Phe-344 are interaction with PCNA. Residues Ala-355–Lys-388 are disordered.

Belongs to the XPG/RAD2 endonuclease family. FEN1 subfamily. In terms of assembly, interacts with PCNA. Three molecules of FEN1 bind to one PCNA trimer with each molecule binding to one PCNA monomer. PCNA stimulates the nuclease activity without altering cleavage specificity. Mg(2+) is required as a cofactor. Post-translationally, phosphorylated. Phosphorylation upon DNA damage induces relocalization to the nuclear plasma.

The protein localises to the nucleus. The protein resides in the nucleolus. It localises to the nucleoplasm. It is found in the mitochondrion. Its function is as follows. Structure-specific nuclease with 5'-flap endonuclease and 5'-3' exonuclease activities involved in DNA replication and repair. During DNA replication, cleaves the 5'-overhanging flap structure that is generated by displacement synthesis when DNA polymerase encounters the 5'-end of a downstream Okazaki fragment. It enters the flap from the 5'-end and then tracks to cleave the flap base, leaving a nick for ligation. Also involved in the long patch base excision repair (LP-BER) pathway, by cleaving within the apurinic/apyrimidinic (AP) site-terminated flap. Acts as a genome stabilization factor that prevents flaps from equilibrating into structures that lead to duplications and deletions. Also possesses 5'-3' exonuclease activity on nicked or gapped double-stranded DNA, and exhibits RNase H activity. Also involved in replication and repair of rDNA and in repairing mitochondrial DNA. This Drosophila grimshawi (Hawaiian fruit fly) protein is Flap endonuclease 1.